The sequence spans 66 residues: Large ribosomal subunit protein uL30 (66 aa).

The protein belongs to the universal ribosomal protein uL30 family. In terms of assembly, part of the 50S ribosomal subunit.

In Chloroherpeton thalassium (strain ATCC 35110 / GB-78), this protein is Large ribosomal subunit protein uL30.